The chain runs to 85 residues: Small ribosomal subunit protein bS16c (85 aa).

It belongs to the bacterial ribosomal protein bS16 family.

It is found in the plastid. The protein localises to the chloroplast. The chain is Small ribosomal subunit protein bS16c from Oryza nivara (Indian wild rice).